The following is a 569-amino-acid chain: RNA demethylase ALKBH10B (569 aa).

Residues 118-151 (QKVAAKKAEDLKQKKTEEEAEEDLKEVVATEEEE) adopt a coiled-coil conformation. The segment at 164-190 (ENDVNGDVEDVEDDSPTSDITDSGSHQ) is disordered. Residues 167–179 (VNGDVEDVEDDSP) are compositionally biased toward acidic residues. Residues 180 to 189 (TSDITDSGSH) are compositionally biased toward polar residues. His366, Glu368, and His421 together coordinate Fe cation. Arg430 contacts 2-oxoglutarate. Basic residues predominate over residues 531 to 545 (KHVKHLPPRAQKKRL). A disordered region spans residues 531–569 (KHVKHLPPRAQKKRLLPLPPAASSSPAGGSTSEPVITVG). Over residues 551 to 560 (AASSSPAGGS) the composition is skewed to low complexity.

The protein belongs to the alkB family. Fe(2+) is required as a cofactor.

It catalyses the reaction an N(6)-methyladenosine in mRNA + 2-oxoglutarate + O2 = an adenosine in mRNA + formaldehyde + succinate + CO2. Dioxygenase that demethylates RNA by oxidative demethylation: specifically demethylates N(6)-methyladenosine (m6A) RNA, the most prevalent internal modification of messenger RNA (mRNA) in higher eukaryotes. ALKBH10B-mediated mRNA m6A demethylation stabilizes the mRNA of the key flowering time regulators FT, SPL3 and SPL9, which are involved in the control of floral transition. In Arabidopsis thaliana (Mouse-ear cress), this protein is RNA demethylase ALKBH10B.